Here is a 320-residue protein sequence, read N- to C-terminus: o-succinylbenzoate synthase (320 aa).

Lysine 133 (proton donor) is an active-site residue. Aspartate 161, glutamate 190, and aspartate 213 together coordinate Mg(2+). The active-site Proton acceptor is the lysine 235.

The protein belongs to the mandelate racemase/muconate lactonizing enzyme family. MenC type 1 subfamily. A divalent metal cation is required as a cofactor.

It carries out the reaction (1R,6R)-6-hydroxy-2-succinyl-cyclohexa-2,4-diene-1-carboxylate = 2-succinylbenzoate + H2O. The protein operates within quinol/quinone metabolism; 1,4-dihydroxy-2-naphthoate biosynthesis; 1,4-dihydroxy-2-naphthoate from chorismate: step 4/7. It functions in the pathway quinol/quinone metabolism; menaquinone biosynthesis. In terms of biological role, converts 2-succinyl-6-hydroxy-2,4-cyclohexadiene-1-carboxylate (SHCHC) to 2-succinylbenzoate (OSB). This chain is o-succinylbenzoate synthase, found in Escherichia coli (strain SMS-3-5 / SECEC).